Reading from the N-terminus, the 446-residue chain is N-succinylarginine dihydrolase (446 aa).

Substrate contacts are provided by residues 19-28, asparagine 110, and 137-138; these read AGLSFGNVAS and HR. Glutamate 174 is a catalytic residue. Substrate is bound at residue arginine 213. Residue histidine 249 is part of the active site. 2 residues coordinate substrate: aspartate 251 and asparagine 364. Catalysis depends on cysteine 370, which acts as the Nucleophile.

The protein belongs to the succinylarginine dihydrolase family. Homodimer.

The enzyme catalyses N(2)-succinyl-L-arginine + 2 H2O + 2 H(+) = N(2)-succinyl-L-ornithine + 2 NH4(+) + CO2. It functions in the pathway amino-acid degradation; L-arginine degradation via AST pathway; L-glutamate and succinate from L-arginine: step 2/5. Functionally, catalyzes the hydrolysis of N(2)-succinylarginine into N(2)-succinylornithine, ammonia and CO(2). The protein is N-succinylarginine dihydrolase of Burkholderia thailandensis (strain ATCC 700388 / DSM 13276 / CCUG 48851 / CIP 106301 / E264).